Here is a 415-residue protein sequence, read N- to C-terminus: MSNVKDMSLAPSGHLKMEWAKRHMPVLCRIAEEFKNDKPFEGLTIGMALHLEAKTAILAETLLEGGAKIVITGCNPLSTQDDVAAACVEKGMEVYAWRGETNEEYYENLNKVLDSNPDIIIDDGADLIFLIHTERTELIGKIMGGCEETTTGIIRLKSMAEEGALKFPVVNVNDAYTKHLFDNRYGTGQSAMDGIIRTTNLLIAGKNVVVGGYGWCGRGVASRAAGHGANVIITEVNPIRALEAKMDGFTVLKMEEAAKIGDIFVTTTGCKDILRMEHFLLMKDGAVLSNAGHFDNEINKNDLKELSKSVKEARFNIEEYDLGNKKIYLLGEGRLVNLACADGHPCEVMDMSFANQALSAKFIKENKGKLENEVYEIPYEQDFKIALLKLHSMGADIDELSPEQRKYLSDWKEGT.

Residues aspartate 123 and glutamate 148 each contribute to the substrate site. An NAD(+)-binding site is contributed by 149–151; sequence TTT. The substrate site is built by lysine 178 and aspartate 182. NAD(+) contacts are provided by residues asparagine 183, 212–217, glutamate 235, 291–293, and asparagine 337; these read GYGWCG and AGH.

This sequence belongs to the adenosylhomocysteinase family. The cofactor is NAD(+).

It localises to the cytoplasm. It catalyses the reaction S-inosyl-L-homocysteine + H2O = L-homocysteine + inosine. The protein operates within amino-acid biosynthesis; S-adenosyl-L-methionine biosynthesis. Catalyzes the hydrolysis of S-inosyl-L-homocysteine (SIH) to L-homocysteine (Hcy) and inosine. Likely functions in a S-adenosyl-L-methionine (SAM) recycling pathway from S-adenosyl-L-homocysteine (SAH) produced from SAM-dependent methylation reactions. Can also catalyze the reverse reaction in vitro, i.e. the synthesis of SIH from Hcy and inosine. This is S-inosyl-L-homocysteine hydrolase from Methanococcus maripaludis (strain DSM 14266 / JCM 13030 / NBRC 101832 / S2 / LL).